Reading from the N-terminus, the 356-residue chain is Non-functional pseudokinase ZRK15 (356 aa).

The Protein kinase domain occupies 62 to 356; sequence NRVSELFDEI…SSSSCGETSL (295 aa). ATP-binding positions include 68-76 and Lys94; that span reads FDEIPYDWY.

The protein belongs to the protein kinase superfamily. Ser/Thr protein kinase family. ZRK subfamily. In terms of assembly, interacts with RPP13L4/ZAR1.

The polypeptide is Non-functional pseudokinase ZRK15 (Arabidopsis thaliana (Mouse-ear cress)).